We begin with the raw amino-acid sequence, 359 residues long: Glyceraldehyde-3-phosphate dehydrogenase, glycosomal (359 aa).

NAD(+)-binding positions include 12-13 (RI), aspartate 38, glutamine 91, and serine 134. Residues 165 to 167 (SCT), threonine 197, 226 to 227 (TG), and arginine 249 each bind D-glyceraldehyde 3-phosphate. The active-site Nucleophile is cysteine 166. Asparagine 335 is an NAD(+) binding site. The Microbody targeting signal motif lies at 357–359 (ARL).

Belongs to the glyceraldehyde-3-phosphate dehydrogenase family. In terms of assembly, homotetramer.

Its subcellular location is the glycosome. The catalysed reaction is D-glyceraldehyde 3-phosphate + phosphate + NAD(+) = (2R)-3-phospho-glyceroyl phosphate + NADH + H(+). Its pathway is carbohydrate degradation; glycolysis; pyruvate from D-glyceraldehyde 3-phosphate: step 1/5. This Trypanosoma cruzi protein is Glyceraldehyde-3-phosphate dehydrogenase, glycosomal.